A 300-amino-acid chain; its full sequence is 3-methyl-2-oxobutanoate hydroxymethyltransferase (300 aa).

Residues D75 and D118 each coordinate Mg(2+). Residues 75-76, D118, and K147 contribute to the 3-methyl-2-oxobutanoate site; that span reads DS. E149 contacts Mg(2+). E216 (proton acceptor) is an active-site residue.

This sequence belongs to the PanB family. As to quaternary structure, homodecamer; pentamer of dimers. The cofactor is Mg(2+).

The protein resides in the cytoplasm. The catalysed reaction is 3-methyl-2-oxobutanoate + (6R)-5,10-methylene-5,6,7,8-tetrahydrofolate + H2O = 2-dehydropantoate + (6S)-5,6,7,8-tetrahydrofolate. It participates in cofactor biosynthesis; (R)-pantothenate biosynthesis; (R)-pantoate from 3-methyl-2-oxobutanoate: step 1/2. Its function is as follows. Catalyzes the reversible reaction in which hydroxymethyl group from 5,10-methylenetetrahydrofolate is transferred onto alpha-ketoisovalerate to form ketopantoate. This Verminephrobacter eiseniae (strain EF01-2) protein is 3-methyl-2-oxobutanoate hydroxymethyltransferase.